Reading from the N-terminus, the 393-residue chain is NAD(P)H-quinone oxidoreductase subunit H, chloroplastic (393 aa).

It belongs to the complex I 49 kDa subunit family. As to quaternary structure, NDH is composed of at least 16 different subunits, 5 of which are encoded in the nucleus.

It localises to the plastid. The protein localises to the chloroplast thylakoid membrane. It carries out the reaction a plastoquinone + NADH + (n+1) H(+)(in) = a plastoquinol + NAD(+) + n H(+)(out). The catalysed reaction is a plastoquinone + NADPH + (n+1) H(+)(in) = a plastoquinol + NADP(+) + n H(+)(out). Its function is as follows. NDH shuttles electrons from NAD(P)H:plastoquinone, via FMN and iron-sulfur (Fe-S) centers, to quinones in the photosynthetic chain and possibly in a chloroplast respiratory chain. The immediate electron acceptor for the enzyme in this species is believed to be plastoquinone. Couples the redox reaction to proton translocation, and thus conserves the redox energy in a proton gradient. The chain is NAD(P)H-quinone oxidoreductase subunit H, chloroplastic from Platanus occidentalis (Sycamore).